Reading from the N-terminus, the 1282-residue chain is Myosin-1 (1282 aa).

The interval 1–30 (MAISKKAGAKKAGAVSKPPPSKGASSKGGV) is disordered. The 680-residue stretch at 44–723 (AGVSDMTLLS…TLFALETMRD (680 aa)) folds into the Myosin motor domain. 137 to 144 (GESGAGKT) is a binding site for ATP. Residue Ser365 is modified to Phosphoserine. Residues 412–494 (VIGVLDIYGF…PGIFSALNDA (83 aa)) are actin-binding. The segment at 569 to 590 (LQKLFPDRPDPNSKKRPPTAGD) is disordered. IQ domains follow at residues 727–747 (HNMAMRIQRAYRNYLRYKEEC) and 748–773 (ARRIQRMWKNNKEGLQYIQLRDYGHQ). The TH1 domain maps to 781 to 977 (RRRFSLLGLR…AVSVCSGEPA (197 aa)). The interval 973-1073 (SGEPANSVSR…PPPAAVAPSE (101 aa)) is disordered. Low complexity predominate over residues 1029 to 1058 (PGSGAAGTARPAAAVGSASAGAGVGATRSA). Positions 1059–1068 (PRPPPPPPAA) are enriched in pro residues. An SH3 domain is found at 1074–1135 (PQVARYKALY…PSNYLELIVQ (62 aa)). The tract at residues 1237 to 1282 (AAAAAAGAGANGKGAGAPPAVAAKPVVAPKPAGSNGRAMPPPPPRR) is disordered. Residues 1252 to 1269 (GAPPAVAAKPVVAPKPAG) show a composition bias toward low complexity.

Belongs to the TRAFAC class myosin-kinesin ATPase superfamily. Myosin family. Phosphorylation of the TEDS site (Ser-365) is required for the polarization of the actin cytoskeleton. Phosphorylation probably activates the myosin-I ATPase activity.

The protein resides in the cytoplasm. Its subcellular location is the cytoskeleton. The protein localises to the actin patch. Its function is as follows. Type-I myosin implicated in the organization of the actin cytoskeleton. Required for proper actin cytoskeleton polarization. At the cell cortex, assembles in patch-like structures together with proteins from the actin-polymerizing machinery and promotes actin assembly. Functions as actin nucleation-promoting factor (NPF) for the Arp2/3 complex. This is Myosin-1 (myo1) from Mycosarcoma maydis (Corn smut fungus).